The following is a 156-amino-acid chain: Phytohormone-binding protein (156 aa).

Gibberellin A3 contacts are provided by glutamine 22, glutamine 68, and threonine 141.

Belongs to the BetVI family.

In terms of biological role, binds gibberellin A3 (GA3) in vitro. This chain is Phytohormone-binding protein, found in Medicago truncatula (Barrel medic).